We begin with the raw amino-acid sequence, 111 residues long: Cornifelin (111 aa).

This sequence belongs to the cornifelin family. Directly or indirectly cross-linked to CE proteins loricin and involucrin (IVL).

The protein resides in the cytoplasm. Part of the insoluble cornified cell envelope (CE) of stratified squamous epithelia. In Mus musculus (Mouse), this protein is Cornifelin (Cnfn).